Reading from the N-terminus, the 354-residue chain is Galectin-9 (354 aa).

Galectin domains lie at 17–147 (FTGI…INFQ) and 226–354 (FFTS…HVQT). Residues asparagine 47, histidine 60, arginine 64, asparagine 74, 81–87 (WGPEERK), histidine 266, arginine 270, threonine 280, and 286–292 (WGPEERS) each bind a beta-D-galactoside.

In terms of tissue distribution, the isoform Long is expressed exclusively in the small intestine.

The protein localises to the cytoplasm. It localises to the nucleus. It is found in the secreted. In terms of biological role, binds galactosides. Has high affinity for the Forssman pentasaccharide. Ligand for HAVCR2/TIM3. Binding to HAVCR2 induces T-helper type 1 lymphocyte (Th1) death. Also stimulates bactericidal activity in infected macrophages by causing macrophage activation and IL1B secretion which restricts intracellular bacterial growth. Ligand for P4HB; the interaction retains P4HB at the cell surface of Th2 T helper cells, increasing disulfide reductase activity at the plasma membrane, altering the plasma membrane redox state and enhancing cell migration. Ligand for CD44; the interaction enhances binding of SMAD3 to the FOXP3 promoter, leading to up-regulation of FOXP3 expression and increased induced regulatory T (iTreg) cell stability and suppressive function. Promotes ability of mesenchymal stromal cells to suppress T-cell proliferation. Expands regulatory T-cells and induces cytotoxic T-cell apoptosis following virus infection. Activates ERK1/2 phosphorylation inducing cytokine (IL-6, IL-8, IL-12) and chemokine (CCL2) production in mast and dendritic cells. Inhibits degranulation and induces apoptosis of mast cells. Induces maturation and migration of dendritic cells. Inhibits natural killer (NK) cell function. Can transform NK cell phenotype from peripheral to decidual during pregnancy. Astrocyte derived galectin-9 enhances microglial TNF production. May play a role in thymocyte-epithelial interactions relevant to the biology of the thymus. May provide the molecular basis for urate flux across cell membranes, allowing urate that is formed during purine metabolism to efflux from cells and serving as an electrogenic transporter that plays an important role in renal and gastrointestinal urate excretion. Highly selective to the anion urate. The chain is Galectin-9 (Lgals9) from Rattus norvegicus (Rat).